Reading from the N-terminus, the 259-residue chain is Eukaryotic translation initiation factor 3 subunit G-2 (259 aa).

An RRM domain is found at Ser179 to Pro257.

This sequence belongs to the eIF-3 subunit G family. As to quaternary structure, component of the eukaryotic translation initiation factor 3 (eIF-3) complex. The eIF-3 complex interacts with pix.

Its subcellular location is the cytoplasm. Its function is as follows. RNA-binding component of the eukaryotic translation initiation factor 3 (eIF-3) complex, which is involved in protein synthesis of a specialized repertoire of mRNAs and, together with other initiation factors, stimulates binding of mRNA and methionyl-tRNAi to the 40S ribosome. The eIF-3 complex specifically targets and initiates translation of a subset of mRNAs involved in cell proliferation. This subunit can bind 18S rRNA. The polypeptide is Eukaryotic translation initiation factor 3 subunit G-2 (Drosophila virilis (Fruit fly)).